We begin with the raw amino-acid sequence, 212 residues long: Large ribosomal subunit protein uL3 (212 aa).

The residue at position 153 (glutamine 153) is an N5-methylglutamine.

This sequence belongs to the universal ribosomal protein uL3 family. In terms of assembly, part of the 50S ribosomal subunit. Forms a cluster with proteins L14 and L19. Post-translationally, methylated by PrmB.

One of the primary rRNA binding proteins, it binds directly near the 3'-end of the 23S rRNA, where it nucleates assembly of the 50S subunit. This Shewanella pealeana (strain ATCC 700345 / ANG-SQ1) protein is Large ribosomal subunit protein uL3.